The following is a 359-amino-acid chain: Type-1 angiotensin II receptor (359 aa).

Residues 1-25 (MILNSSTEDGIKRIQDDCPKAGRHN) are Extracellular-facing. N-linked (GlcNAc...) asparagine glycosylation occurs at asparagine 4. 2 residues coordinate angiotensin II: glutamine 15 and aspartate 17. 2 disulfide bridges follow: cysteine 18–cysteine 274 and cysteine 101–cysteine 180. Residues 26–55 (YIFVMIPTLYSIIFVVGIFGNSLVVIVIYF) traverse the membrane as a helical segment. The Cytoplasmic segment spans residues 56 to 61 (YMKLKT). Residues 62 to 89 (VASVFLLNLALADLCFLLTLPLWAVYTA) form a helical membrane-spanning segment. The Extracellular segment spans residues 90–98 (MEYRWPFGN). A helical membrane pass occupies residues 99–125 (YLCKIASASVSFNLYASVFLLTCLSID). The Cytoplasmic portion of the chain corresponds to 126-141 (RYLAIVHPMKSRLRRT). The helical transmembrane segment at 142 to 165 (MLVAKVTCIIIWLLAGLASLPAII) threads the bilayer. Residues 166–190 (HRNVFFIENTNITVCAFHYESQNST) are Extracellular-facing. Residue arginine 167 participates in angiotensin II binding. Residue asparagine 176 is glycosylated (N-linked (GlcNAc...) asparagine). Angiotensin II contacts are provided by phenylalanine 182, histidine 183, and tyrosine 184. Asparagine 188 is a glycosylation site (N-linked (GlcNAc...) asparagine). Residues 191 to 216 (LPIGLGLTKNILGFLFPFLIILTSYT) traverse the membrane as a helical segment. Residue lysine 199 participates in angiotensin II binding. The Cytoplasmic portion of the chain corresponds to 217–239 (LIWKALKKAYEIQKNKPRNDDIF). Residues 240-268 (KIIMAIVLFFFFSWIPHQIFTFLDVLIQL) traverse the membrane as a helical segment. The Extracellular portion of the chain corresponds to 269-278 (GIIRDCRIAD). Residues 279 to 304 (IVDTAMPITICIAYFNNCLNPLFYGF) traverse the membrane as a helical segment. At 305–359 (LGKKFKKYFLQLLKYIPPKAKSHSNLSTKMSTLSYRPSDNVSSSTKKPAPCFEVE) the chain is on the cytoplasmic side. The span at 335–350 (STLSYRPSDNVSSSTK) shows a compositional bias: polar residues. The tract at residues 335–359 (STLSYRPSDNVSSSTKKPAPCFEVE) is disordered. A lipid anchor (S-palmitoyl cysteine) is attached at cysteine 355.

It belongs to the G-protein coupled receptor 1 family. Interacts with MAS1. Interacts with ARRB1. Interacts with FLNA (via filamin repeat 21); increases PKA-mediated phosphorylation of FLNA. C-terminal Ser or Thr residues may be phosphorylated.

The protein resides in the cell membrane. Receptor for angiotensin II, a vasoconstricting peptide, which acts as a key regulator of blood pressure and sodium retention by the kidney. The activated receptor in turn couples to G-alpha proteins G(q) (GNAQ, GNA11, GNA14 or GNA15) and thus activates phospholipase C and increases the cytosolic Ca(2+) concentrations, which in turn triggers cellular responses such as stimulation of protein kinase C. The sequence is that of Type-1 angiotensin II receptor (AGTR1) from Pan troglodytes (Chimpanzee).